The following is a 258-amino-acid chain: Cell division protein FtsQ (258 aa).

The Cytoplasmic segment spans residues 1 to 29 (MAKNAPAPRGARRKPVKKVGVPLRERVAT). The chain crosses the membrane as a helical span at residues 30–50 (AVPWMLVGSVAMVSLLAVIYL). At 51 to 258 (PAALDGYPIR…MAVTWREQQS (208 aa)) the chain is on the periplasmic side. The region spanning 57–127 (YPIRKVGVDG…DTVVLTVEER (71 aa)) is the POTRA domain.

This sequence belongs to the FtsQ/DivIB family. FtsQ subfamily. Part of a complex composed of FtsB, FtsL and FtsQ.

The protein localises to the cell inner membrane. In terms of biological role, essential cell division protein. May link together the upstream cell division proteins, which are predominantly cytoplasmic, with the downstream cell division proteins, which are predominantly periplasmic. May control correct divisome assembly. In Alcanivorax borkumensis (strain ATCC 700651 / DSM 11573 / NCIMB 13689 / SK2), this protein is Cell division protein FtsQ.